The following is a 1616-amino-acid chain: S-layer-related protein (1616 aa).

A signal peptide spans 1–30 (MKSLLRKWNGMMIIALVISLLTPAWGKASA). Positions 1115 to 1185 (VKALKLDRGT…GSGTVQATYE (71 aa)) constitute a BIG2 domain. Disordered regions lie at residues 1191–1244 (ARVS…DGRN), 1372–1455 (NKRN…GRAR), 1523–1554 (ARGR…REAG), and 1585–1616 (FAGG…ARPC). The span at 1199 to 1225 (STGGGSDTGSGTGSGSGGGSAGGGGTA) shows a compositional bias: gly residues. Residues 1372 to 1387 (NKRNRRLRKLRPKNRK) show a composition bias toward basic residues. Positions 1406–1416 (PPECSASCPPA) are enriched in low complexity. One can recognise an SLH domain in the interval 1438-1502 (WSPPRSASPT…ALDPAPAAAD (65 aa)). Residues 1536 to 1554 (RGADTRTDERDAHARREAG) show a composition bias toward basic and acidic residues. Residues 1594-1616 (GRTRGRTLRARPARLPVRKARPC) show a composition bias toward basic residues.

It is found in the secreted. The protein localises to the cell wall. Its subcellular location is the S-layer. In terms of biological role, the S-layer is a paracrystalline mono-layered assembly of proteins which coats the surface of bacteria. May play a role in the export of butirosin from the organism. The chain is S-layer-related protein (butB) from Niallia circulans (Bacillus circulans).